The chain runs to 354 residues: Large ribosomal subunit protein uL10 (354 aa).

Acidic residues-rich tracts occupy residues 286-296 (DEEALPEELQD) and 307-345 (AEAD…DGDG). A disordered region spans residues 286 to 354 (DEEALPEELQ…GGDALGDMFG (69 aa)).

This sequence belongs to the universal ribosomal protein uL10 family. As to quaternary structure, part of the 50S ribosomal subunit. Forms part of the ribosomal stalk which helps the ribosome interact with GTP-bound translation factors. Forms a heptameric L10(L12)2(L12)2(L12)2 complex, where L10 forms an elongated spine to which the L12 dimers bind in a sequential fashion.

Its function is as follows. Forms part of the ribosomal stalk, playing a central role in the interaction of the ribosome with GTP-bound translation factors. In Natronomonas pharaonis (strain ATCC 35678 / DSM 2160 / CIP 103997 / JCM 8858 / NBRC 14720 / NCIMB 2260 / Gabara) (Halobacterium pharaonis), this protein is Large ribosomal subunit protein uL10.